Here is a 157-residue protein sequence, read N- to C-terminus: NADPH-dependent 7-cyano-7-deazaguanine reductase (157 aa).

The active-site Thioimide intermediate is the Cys55. The active-site Proton donor is the Asp62. Residues Val77–Ser79 and His96–Glu97 each bind substrate.

This sequence belongs to the GTP cyclohydrolase I family. QueF type 1 subfamily.

It is found in the cytoplasm. It carries out the reaction 7-aminomethyl-7-carbaguanine + 2 NADP(+) = 7-cyano-7-deazaguanine + 2 NADPH + 3 H(+). It functions in the pathway tRNA modification; tRNA-queuosine biosynthesis. Catalyzes the NADPH-dependent reduction of 7-cyano-7-deazaguanine (preQ0) to 7-aminomethyl-7-deazaguanine (preQ1). This is NADPH-dependent 7-cyano-7-deazaguanine reductase from Neisseria meningitidis serogroup A / serotype 4A (strain DSM 15465 / Z2491).